A 327-amino-acid polypeptide reads, in one-letter code: GMP reductase (327 aa).

Cysteine 175 functions as the Thioimidate intermediate in the catalytic mechanism. NADP(+) is bound at residue 204–227 (IIADGGIRTNGDVAKSIRFGATMV).

Belongs to the IMPDH/GMPR family. GuaC type 2 subfamily.

It catalyses the reaction IMP + NH4(+) + NADP(+) = GMP + NADPH + 2 H(+). Functionally, catalyzes the irreversible NADPH-dependent deamination of GMP to IMP. It functions in the conversion of nucleobase, nucleoside and nucleotide derivatives of G to A nucleotides, and in maintaining the intracellular balance of A and G nucleotides. The protein is GMP reductase of Bacillus cereus (strain ZK / E33L).